The sequence spans 480 residues: ATP synthase subunit beta (480 aa).

Residue 153-160 coordinates ATP; the sequence is GGAGVGKT.

The protein belongs to the ATPase alpha/beta chains family. As to quaternary structure, F-type ATPases have 2 components, CF(1) - the catalytic core - and CF(0) - the membrane proton channel. CF(1) has five subunits: alpha(3), beta(3), gamma(1), delta(1), epsilon(1). CF(0) has three main subunits: a(1), b(2) and c(9-12). The alpha and beta chains form an alternating ring which encloses part of the gamma chain. CF(1) is attached to CF(0) by a central stalk formed by the gamma and epsilon chains, while a peripheral stalk is formed by the delta and b chains.

Its subcellular location is the cell membrane. The enzyme catalyses ATP + H2O + 4 H(+)(in) = ADP + phosphate + 5 H(+)(out). Functionally, produces ATP from ADP in the presence of a proton gradient across the membrane. The catalytic sites are hosted primarily by the beta subunits. The chain is ATP synthase subunit beta from Lactobacillus gasseri (strain ATCC 33323 / DSM 20243 / BCRC 14619 / CIP 102991 / JCM 1131 / KCTC 3163 / NCIMB 11718 / NCTC 13722 / AM63).